A 141-amino-acid chain; its full sequence is Keratin-associated protein 19-2 (141 aa).

The tract at residues 5 to 135 (SGYSGGLGYG…CRRSSCCGGY (131 aa)) is 48 X 2 AA repeats of G-[YCGS].

This sequence belongs to the KRTAP type 19 family. In terms of assembly, interacts with hair keratins. Strong expression in narrowly defined pattern restricted to the lower and middle cortical regions of the hair shaft in both developing and cycling hair. During hair follicle regression (catagen), expression levels decrease until expression is no longer detectable in follicles at resting stage (telogen).

Functionally, in the hair cortex, hair keratin intermediate filaments are embedded in an interfilamentous matrix, consisting of hair keratin-associated proteins (KRTAP), which are essential for the formation of a rigid and resistant hair shaft through their extensive disulfide bond cross-linking with abundant cysteine residues of hair keratins. The matrix proteins include the high-sulfur and high-glycine-tyrosine keratins. This Mus musculus (Mouse) protein is Keratin-associated protein 19-2 (Krtap19-2).